Here is a 247-residue protein sequence, read N- to C-terminus: MEKSTLLSAVLKHRDALASVAEFLRILAGICWTLNYFSMLRTSQKDKIPSTGIFPLCNDIGWEFIYAFIYPKASAHWEGGVRVWFLVHCIVIFFIIKNAHNEWDYFPLIQRNLYFLYGIVTIGFAIGQYSFAREVGPDLGFFYGGVLCQTLASLGPIAQILSRNSTRGASLLLRAVATFGGFIKLTIYYLTGNAAGPWFESPMCKFYIGLTLILDFTYPICYYVIRRQELVNDEGDKKKKTKSGKAA.

5 helical membrane-spanning segments follow: residues 20–40 (VAEF…FSML), 51–71 (TGIF…FIYP), 76–96 (HWEG…FFII), 112–132 (NLYF…YSFA), and 141–161 (FFYG…AQIL). Residue N164 is glycosylated (N-linked (GlcNAc...) asparagine). 2 consecutive transmembrane segments (helical) span residues 179 to 199 (FGGF…GPWF) and 205 to 225 (KFYI…YYVI).

The protein belongs to the paxB family.

The protein resides in the membrane. It functions in the pathway secondary metabolite biosynthesis; terpenoid biosynthesis. Functionally, terpene cyclase; part of the gene cluster that mediates the biosynthesis of andrastins, meroterpenoid compounds that exhibit inhibitory activity against ras farnesyltransferase, suggesting that they could be promising leads for antitumor agents. The first step of the pathway is the synthesis of 3,5-dimethylorsellinic acid (DMOA) by the polyketide synthase adrD via condensation of one acetyl-CoA starter unit with 3 malonyl-CoA units and 2 methylations. DMAO is then converted to farnesyl-DMAO by the prenyltransferase adrG. The methyltransferase adrK catalyzes the methylation of the carboxyl group of farnesyl-DMAO to farnesyl-DMAO methyl ester which is further converted to epoxyfarnesyl-DMAO methyl ester by the FAD-dependent monooxygenase adrH. The terpene cyclase adrI then catalyzes the carbon skeletal rearrangement to generate the andrastin E, the first compound in the pathway having the andrastin scaffold, with the tetracyclic ring system. The post-cyclization tailoring enzymes adrF, adrE, adrJ, and adrA, are involved in the conversion of andrastin E into andrastin A. The short chain dehydrogenase adrF is responsible for the oxidation of the C-3 a hydroxyl group of andrastin E to yield the corresponding ketone, andrastin D. The ketoreductase adrE stereoselectively reduces the carbonyl moiety to reverse the stereochemistry of the C-3 position to yield andrastin F. The acetyltransferase adrJ is the acetyltransferase that attaches the acetyl group to the C-3 hydroxyl group of andrastin F to yield andrastin C. Finally, the cytochrome P450 monooxygenase adrA catalyzes two sequential oxidation reactions of the C-23 methyl group, to generate the corresponding alcohol andrastin B, and aldehyde andrastin A. In Penicillium rubens (strain ATCC 28089 / DSM 1075 / NRRL 1951 / Wisconsin 54-1255) (Penicillium chrysogenum), this protein is Terpene cyclase adrI.